Consider the following 349-residue polypeptide: UDP-3-O-acylglucosamine N-acyltransferase (349 aa).

The active-site Proton acceptor is His-240.

Belongs to the transferase hexapeptide repeat family. LpxD subfamily. In terms of assembly, homotrimer.

The enzyme catalyses a UDP-3-O-[(3R)-3-hydroxyacyl]-alpha-D-glucosamine + a (3R)-hydroxyacyl-[ACP] = a UDP-2-N,3-O-bis[(3R)-3-hydroxyacyl]-alpha-D-glucosamine + holo-[ACP] + H(+). The protein operates within bacterial outer membrane biogenesis; LPS lipid A biosynthesis. Its function is as follows. Catalyzes the N-acylation of UDP-3-O-acylglucosamine using 3-hydroxyacyl-ACP as the acyl donor. Is involved in the biosynthesis of lipid A, a phosphorylated glycolipid that anchors the lipopolysaccharide to the outer membrane of the cell. The polypeptide is UDP-3-O-acylglucosamine N-acyltransferase (Porphyromonas gingivalis (strain ATCC BAA-308 / W83)).